Here is an 891-residue protein sequence, read N- to C-terminus: Fanconi-associated nuclease 1 homolog (891 aa).

Residues Glu712, Asp833, Glu852, and Val853 each coordinate Mn(2+). The VRR-NUC domain maps to 770 to 884; it reads GMAEEILIIS…GFNVEICKVR (115 aa).

It belongs to the FAN1 family. It depends on Mn(2+) as a cofactor. Requires Mg(2+) as cofactor.

It localises to the nucleus. The enzyme catalyses Hydrolytically removes 5'-nucleotides successively from the 3'-hydroxy termini of 3'-hydroxy-terminated oligonucleotides.. In terms of biological role, nuclease required for the repair of DNA interstrand cross-links (ICLs). Acts as a 5'-3' exonuclease that anchors at a cut end of DNA and cleaves DNA successively at every third nucleotide, allowing to excise an ICL from one strand through flanking incisions. May act upstream of the helicase RECQL4A and the ATPase RAD5A, which is involved in error-free post-replicative repair. Functions independently of MUS81 pathway, but in a similar pathway with RECQ4A, RAD5A and MFH1 in ICL repair. The polypeptide is Fanconi-associated nuclease 1 homolog (Arabidopsis thaliana (Mouse-ear cress)).